We begin with the raw amino-acid sequence, 517 residues long: Benzoate 4-monooxygenase bphA (517 aa).

A helical transmembrane segment spans residues L4–L24. N-linked (GlcNAc...) asparagine glycans are attached at residues N282 and N325. C461 lines the heme pocket.

Belongs to the cytochrome P450 family. The cofactor is heme.

The protein resides in the membrane. It carries out the reaction benzoate + reduced [NADPH--hemoprotein reductase] + O2 = 4-hydroxybenzoate + oxidized [NADPH--hemoprotein reductase] + H2O + H(+). Its function is as follows. Cytochrome P450 monooxygenase; part of the benzoic acid degradation pathway also known as the protocatechuic acid pathway. Benzoic acid debradation begins with the conversion of benzoic acid into 4-hydroxybenzoic acid through hydroxylation by the benzoate-4-monooxygenase bphA, and its partner NADPH-cytochrome P450 reductase cprA which act as a mediator in electron donation from NADPH. 4-Hydroxybenzoic acid is then converted into 3,4-dihydroxybenzoic acid (also called protocatechuic acid) by the p-hydroxybenzoate-m-hydroxylase phhA. Protocatechuic acid is converted into 3-carboxy-cis,cis-muconic acid by the intradiol ring-cleavage dioxygenase prcA, which is further metabolized through the 3-oxoadipate pathway to finally enter the tricarboxylic acid cycle (TCA). This chain is Benzoate 4-monooxygenase bphA, found in Aspergillus niger (strain ATCC MYA-4892 / CBS 513.88 / FGSC A1513).